A 463-amino-acid chain; its full sequence is Elongation factor 1-alpha (463 aa).

The residue at position 2 (G2) is a N,N,N-trimethylglycine. An N6,N6-dimethyllysine; alternate modification is found at K3. At K3 the chain carries N6-methyllysine; alternate. Residues 5-239 (KNHVNVVVIG…DAIEPPSRPT (235 aa)) form the tr-type G domain. Residues 14 to 21 (GHVDSGKS) are G1. GTP is bound at residue 14-21 (GHVDSGKS). K30 bears the N6-methyllysine mark. A G2 region spans residues 70-74 (GITID). K79 carries the post-translational modification N6,N6,N6-trimethyllysine. Positions 91 to 94 (DAPG) are G3. Residues 91 to 95 (DAPGH) and 153 to 156 (NKMD) each bind GTP. The tract at residues 153-156 (NKMD) is G4. Residues 191–193 (SGW) form a G5 region. The residue at position 315 (K315) is an N6,N6-dimethyllysine; alternate. K315 is subject to N6-methyllysine; alternate. An N6-methyllysine modification is found at K389.

It belongs to the TRAFAC class translation factor GTPase superfamily. Classic translation factor GTPase family. EF-Tu/EF-1A subfamily.

Its subcellular location is the cytoplasm. Its function is as follows. This protein promotes the GTP-dependent binding of aminoacyl-tRNA to the A-site of ribosomes during protein biosynthesis. The polypeptide is Elongation factor 1-alpha (TEF) (Puccinia graminis (Black stem rust fungus)).